The sequence spans 197 residues: Small ribosomal subunit protein uS4B (197 aa).

An S4 RNA-binding domain is found at 88-151; it reads CRLDNIAYRI…RKNDEFADNF (64 aa).

It belongs to the universal ribosomal protein uS4 family. As to quaternary structure, part of the 30S ribosomal subunit. Contacts protein S5. The interaction surface between S4 and S5 is involved in control of translational fidelity.

Its function is as follows. One of the primary rRNA binding proteins, it binds directly to 16S rRNA where it nucleates assembly of the body of the 30S subunit. Functionally, with S5 and S12 plays an important role in translational accuracy. The protein is Small ribosomal subunit protein uS4B of Clostridium botulinum (strain Langeland / NCTC 10281 / Type F).